A 337-amino-acid polypeptide reads, in one-letter code: Trace amine-associated receptor 5 (337 aa).

The Extracellular segment spans residues 1-34 (MRAVFIQGAEEHPAAFCYQVNGSCPRTVHTLGIQ). Residue Asn-21 is glycosylated (N-linked (GlcNAc...) asparagine). Cystine bridges form between Cys-24–Cys-188 and Cys-99–Cys-192. A helical membrane pass occupies residues 35–55 (LVIYLACAAGMLIIVLGNLFV). The Cytoplasmic segment spans residues 56–70 (AFAVSYFKALHTPTN). Residues 71-91 (FLLLSLALADMFLGLLVLPLS) traverse the membrane as a helical segment. Residues 92–109 (TIRSVESCWFFGDFLCRL) are Extracellular-facing. A helical membrane pass occupies residues 110 to 130 (HTYLDPLFCLTSIFHLCFISI). The Cytoplasmic segment spans residues 131-154 (DRHCAICDPLLYPSKFTVRVALRY). A helical transmembrane segment spans residues 155–175 (ILAGWGVPAAYTSLFLYTDVV). The tract at residues 176 to 189 (ETRLSQWLEEMPCV) is extracellular Loop 2 (ECL2). Over 176 to 204 (ETRLSQWLEEMPCVGSCQLLLNKFWGWLN) the chain is Extracellular. A helical membrane pass occupies residues 205–225 (FPLFFVPCLIMISLYVKIFVV). Residues 226-253 (ATRQAQQITTLSKNLAGAAKHDRKAAKT) are Cytoplasmic-facing. A helical membrane pass occupies residues 254 to 274 (LGIAVGIYLLCWLPFTIDTMV). Topologically, residues 275 to 284 (DSLLHFITPP) are extracellular. Residues 285–307 (LVFDIFIWFAYFNSACNPIIYVF) form a helical membrane-spanning segment. The Cytoplasmic segment spans residues 308–337 (SYQWFRKALKLTLSQKVFSPQTRTVDLYQE).

It belongs to the G-protein coupled receptor 1 family.

It is found in the cell membrane. Olfactory receptor specific for trimethylamine, a trace amine. Trimethylamine is a bacterial metabolite found in some animal odors. Trimethylamine-binding causes a conformation change that triggers signaling via G(s)-class of G alpha proteins (GNAL or GNAS). The chain is Trace amine-associated receptor 5 (TAAR5) from Pan troglodytes (Chimpanzee).